A 562-amino-acid chain; its full sequence is T-complex protein 1 subunit epsilon (562 aa).

It belongs to the TCP-1 chaperonin family. In terms of assembly, heterooligomeric complex of about 850 to 900 kDa that forms two stacked rings, 12 to 16 nm in diameter.

Its subcellular location is the cytoplasm. Functionally, molecular chaperone; assists the folding of proteins upon ATP hydrolysis. Known to play a role, in vitro, in the folding of actin and tubulin. In yeast may play a role in mitotic spindle formation. In Saccharomyces cerevisiae (strain ATCC 204508 / S288c) (Baker's yeast), this protein is T-complex protein 1 subunit epsilon (CCT5).